A 361-amino-acid polypeptide reads, in one-letter code: MTVPHIPRGPVMADIAAFRLTEEEKQRLLDPAVGGIILFRRNFQNIEQLKTLTAEIKALRTPELIIAVDHEGGRVQRFIEGFTRLPAMSTLGEIWDKDGASAAETAAGQVGRVLATELSACGIDLSFTPVLDLDWGNCPVIGNRSFHHNPEAVAHLALALQKGLAKGGMKSCGKHFPGHGFVEGDSHLVLPEDRRSLSELEAADLAPFHIMSREGMAAVMPAHVVYPQVDTKPAGFSEIWLKQILRRDIGFKGVIFSDDLTMEGACGVGGLKERARISFEAGCDIVLVCNRPDLVDELREDFRIPDNPALAQRWQYMANTLGSAAAQAVMQTADFQEAQAFVAGLASPQDTAGGVKVGEAF.

Substrate-binding positions include Asp-69, Arg-77, Arg-144, and Lys-174–His-175. His-187 (proton donor/acceptor) is an active-site residue. The active-site Nucleophile is Asp-258.

Belongs to the glycosyl hydrolase 3 family. NagZ subfamily.

Its subcellular location is the cytoplasm. The enzyme catalyses Hydrolysis of terminal non-reducing N-acetyl-D-hexosamine residues in N-acetyl-beta-D-hexosaminides.. It functions in the pathway cell wall biogenesis; peptidoglycan recycling. In terms of biological role, plays a role in peptidoglycan recycling by cleaving the terminal beta-1,4-linked N-acetylglucosamine (GlcNAc) from peptide-linked peptidoglycan fragments, giving rise to free GlcNAc, anhydro-N-acetylmuramic acid and anhydro-N-acetylmuramic acid-linked peptides. The polypeptide is Beta-hexosaminidase (Neisseria meningitidis serogroup C / serotype 2a (strain ATCC 700532 / DSM 15464 / FAM18)).